Here is a 334-residue protein sequence, read N- to C-terminus: Holliday junction branch migration complex subunit RuvB (334 aa).

Residues 4-184 (ADRLIQPQIQ…FGIPLRLEFY (181 aa)) are large ATPase domain (RuvB-L). ATP-binding positions include Arg24, Gly65, Lys68, Thr69, Thr70, 131–133 (EDY), Arg174, Tyr184, and Arg221. Residue Thr69 coordinates Mg(2+). The small ATPAse domain (RuvB-S) stretch occupies residues 185–255 (NIKDLSTIVT…VAEHALDLLD (71 aa)). A head domain (RuvB-H) region spans residues 258–334 (SEGFDYMDRK…YQHFELIKPE (77 aa)). Arg294, Arg313, and Arg318 together coordinate DNA.

This sequence belongs to the RuvB family. As to quaternary structure, homohexamer. Forms an RuvA(8)-RuvB(12)-Holliday junction (HJ) complex. HJ DNA is sandwiched between 2 RuvA tetramers; dsDNA enters through RuvA and exits via RuvB. An RuvB hexamer assembles on each DNA strand where it exits the tetramer. Each RuvB hexamer is contacted by two RuvA subunits (via domain III) on 2 adjacent RuvB subunits; this complex drives branch migration. In the full resolvosome a probable DNA-RuvA(4)-RuvB(12)-RuvC(2) complex forms which resolves the HJ.

The protein localises to the cytoplasm. The catalysed reaction is ATP + H2O = ADP + phosphate + H(+). The RuvA-RuvB-RuvC complex processes Holliday junction (HJ) DNA during genetic recombination and DNA repair, while the RuvA-RuvB complex plays an important role in the rescue of blocked DNA replication forks via replication fork reversal (RFR). RuvA specifically binds to HJ cruciform DNA, conferring on it an open structure. The RuvB hexamer acts as an ATP-dependent pump, pulling dsDNA into and through the RuvAB complex. RuvB forms 2 homohexamers on either side of HJ DNA bound by 1 or 2 RuvA tetramers; 4 subunits per hexamer contact DNA at a time. Coordinated motions by a converter formed by DNA-disengaged RuvB subunits stimulates ATP hydrolysis and nucleotide exchange. Immobilization of the converter enables RuvB to convert the ATP-contained energy into a lever motion, pulling 2 nucleotides of DNA out of the RuvA tetramer per ATP hydrolyzed, thus driving DNA branch migration. The RuvB motors rotate together with the DNA substrate, which together with the progressing nucleotide cycle form the mechanistic basis for DNA recombination by continuous HJ branch migration. Branch migration allows RuvC to scan DNA until it finds its consensus sequence, where it cleaves and resolves cruciform DNA. This Shewanella baltica (strain OS223) protein is Holliday junction branch migration complex subunit RuvB.